The following is a 1434-amino-acid chain: DNA-directed RNA polymerase subunit beta (1434 aa).

This sequence belongs to the RNA polymerase beta chain family. The RNAP catalytic core consists of 2 alpha, 1 beta, 1 beta' and 1 omega subunit. When a sigma factor is associated with the core the holoenzyme is formed, which can initiate transcription.

It catalyses the reaction RNA(n) + a ribonucleoside 5'-triphosphate = RNA(n+1) + diphosphate. Functionally, DNA-dependent RNA polymerase catalyzes the transcription of DNA into RNA using the four ribonucleoside triphosphates as substrates. This is DNA-directed RNA polymerase subunit beta from Ureaplasma parvum serovar 3 (strain ATCC 27815 / 27 / NCTC 11736).